The chain runs to 120 residues: Putative non-specific lipid-transfer protein 14 (120 aa).

The first 22 residues, methionine 1–alanine 22, serve as a signal peptide directing secretion. 4 cysteine pairs are disulfide-bonded: cysteine 30–cysteine 80, cysteine 40–cysteine 57, cysteine 58–cysteine 102, and cysteine 78–cysteine 116.

The protein belongs to the plant LTP family.

In terms of biological role, plant non-specific lipid-transfer proteins transfer phospholipids as well as galactolipids across membranes. May play a role in wax or cutin deposition in the cell walls of expanding epidermal cells and certain secretory tissues. The sequence is that of Putative non-specific lipid-transfer protein 14 (LTP14) from Arabidopsis thaliana (Mouse-ear cress).